The following is a 108-amino-acid chain: UPF0145 protein Ava_0420 (108 aa).

It belongs to the UPF0145 family.

This chain is UPF0145 protein Ava_0420, found in Trichormus variabilis (strain ATCC 29413 / PCC 7937) (Anabaena variabilis).